The following is a 421-amino-acid chain: Testin (421 aa).

In terms of domain architecture, PET spans 92 to 199 (MILTNPVAAK…GDVKLPQEMD (108 aa)). LIM zinc-binding domains follow at residues 234 to 297 (YSCY…CDSE), 299 to 359 (PRCA…NHAV), and 362 to 421 (QGCH…KMMS).

Belongs to the prickle / espinas / testin family. Interacts via LIM domain 1 with ZYX. Interacts (via LIM domain 3) with ENAH and VASP. Interacts with ALKBH4, talin, actin, alpha-actinin, GRIP1 and PXN. Interacts (via LIM domain 2) with ACTL7A (via N-terminus). Heterodimer with ACTL7A; the heterodimer interacts with ENAH to form a heterotrimer.

The protein resides in the cytoplasm. The protein localises to the cell junction. It is found in the focal adhesion. Scaffold protein that may play a role in cell adhesion, cell spreading and in the reorganization of the actin cytoskeleton. Plays a role in the regulation of cell proliferation. May act as a tumor suppressor. This is Testin (TES) from Loxodonta africana (African elephant).